A 950-amino-acid chain; its full sequence is 5'-3' exoribonuclease 2 (950 aa).

Residues 262 to 278 (PCGLCNQFGHEVKDCEG) form a CCHC-type zinc finger. K286 is modified (N6-acetyllysine). The interval 408-508 (KDDEDSFRRR…SDSEPEPEDN (101 aa)) is disordered. The segment covering 416-426 (RRQKEKRKRMK) has biased composition (basic residues). T439 carries the phosphothreonine modification. A compositionally biased stretch (polar residues) spans 445–458 (SRNSPGSQVASNPR). S448, S471, S473, S475, S482, S487, S499, S501, and S678 each carry phosphoserine. Low complexity predominate over residues 468–482 (NNSSPSISPNTSFTS). Asymmetric dimethylarginine; alternate occurs at positions 824, 847, and 851. Omega-N-methylarginine; alternate occurs at positions 824, 847, and 851. R880 is subject to Asymmetric dimethylarginine. R883 is modified (asymmetric dimethylarginine; alternate). R883 is modified (omega-N-methylarginine; alternate). The residue at position 895 (R895) is an Omega-N-methylarginine. Positions 911 to 950 (MLAGPGGYPPRRDDRGGRQGYPREGRKYPLPPPSGRYNWN) are disordered. Basic and acidic residues predominate over residues 920–937 (PRRDDRGGRQGYPREGRK). An Asymmetric dimethylarginine; alternate modification is found at R946. Omega-N-methylarginine; alternate is present on R946.

It belongs to the 5'-3' exonuclease family. XRN2/RAT1 subfamily. In terms of assembly, interacts with POLR2A and SMN1/SMN2. Interacts with CDKN2AIP and NKRF. Interacts with CDKN2AIPNL; the interaction is direct. Interacts with TRIM71 (via NHL repeats) in an RNA-dependent manner. Interacts with DHX34; the interaction is RNA-independent. As to expression, expressed in the spleen, thymus, prostate, testis, ovary, small intestine, colon, peripheral blood leukocytes, heart, brain, placenta, lung, liver, skeletal muscle, kidney, and pancreas. Isoform 2 is expressed predominantly in peripheral blood leukocytes.

Its subcellular location is the nucleus. The protein localises to the nucleolus. In terms of biological role, possesses 5'-&gt;3' exoribonuclease activity. May promote the termination of transcription by RNA polymerase II. During transcription termination, cleavage at the polyadenylation site liberates a 5' fragment which is subsequently processed to form the mature mRNA and a 3' fragment which remains attached to the elongating polymerase. The processive degradation of this 3' fragment by this protein may promote termination of transcription. Binds to RNA polymerase II (RNAp II) transcription termination R-loops formed by G-rich pause sites. This is 5'-3' exoribonuclease 2 (XRN2) from Homo sapiens (Human).